The sequence spans 67 residues: Small ribosomal subunit protein bS21 (67 aa).

It belongs to the bacterial ribosomal protein bS21 family.

The protein is Small ribosomal subunit protein bS21 of Oleidesulfovibrio alaskensis (strain ATCC BAA-1058 / DSM 17464 / G20) (Desulfovibrio alaskensis).